A 712-amino-acid polypeptide reads, in one-letter code: Small ribosomal subunit protein uS3c (712 aa).

The tract at residues 1 to 118 is S3-like 1st part; that stretch reads MGQKVHPLGF…IKVSKDLVTN (118 aa). Residues 119–580 are intervening sequence (IVS); that stretch reads LQKTRKYLFK…LQTAFLTQIE (462 aa). Positions 581 to 712 are S3-like 2nd part; that stretch reads SQRKMYKANL…VWIFKGYSKI (132 aa).

Belongs to the universal ribosomal protein uS3 family. As to quaternary structure, part of the 30S ribosomal subunit.

It localises to the plastid. The protein localises to the chloroplast. This Chlamydomonas reinhardtii (Chlamydomonas smithii) protein is Small ribosomal subunit protein uS3c (rps3).